The primary structure comprises 549 residues: Cytoplasmic trehalase (549 aa).

Residues Arg-168, 175–176, Asn-212, 221–223, 292–294, and Gly-324 each bind substrate; these read WD, RSQ, and RDE. Residues Asp-326 and Glu-509 each act as proton donor/acceptor in the active site. Position 525 (Glu-525) interacts with substrate.

The protein belongs to the glycosyl hydrolase 37 family. In terms of assembly, monomer.

The protein resides in the cytoplasm. The catalysed reaction is alpha,alpha-trehalose + H2O = alpha-D-glucose + beta-D-glucose. The protein operates within glycan degradation; trehalose degradation; D-glucose from alpha,alpha-trehalose: step 1/1. Functionally, hydrolyzes trehalose to glucose. Could be involved, in cells returning to low osmolarity conditions, in the utilization of the accumulated cytoplasmic trehalose, which was synthesized in response to high osmolarity. In Escherichia coli O127:H6 (strain E2348/69 / EPEC), this protein is Cytoplasmic trehalase.